The following is a 439-amino-acid chain: Structure-specific endonuclease subunit SLX1 homolog (439 aa).

Disordered stretches follow at residues 1–28 (METFILSSDSDDDCPPPPKRRSIEGVPK) and 117–140 (DDDDDDEKESSTEHADDDLNLRAL). Residues 125–136 (ESSTEHADDDLN) are compositionally biased toward basic and acidic residues. In terms of domain architecture, GIY-YIG spans 166 to 253 (EFYGVYCLIS…PAVSKSLKEK (88 aa)). The SLX1-type zinc-finger motif lies at 335–390 (CRLCGKDIEKLWGLVRCISQSCHSHFHSKCLAEHGLKNKNEYADQIYPLKSNCPIC).

Belongs to the SLX1 family. Forms a heterodimer with him-18/slx-4. A divalent metal cation serves as cofactor.

The protein resides in the nucleus. Functionally, catalytic subunit of a heterodimeric structure-specific endonuclease that resolves DNA secondary structures generated during DNA repair and recombination. Has endonuclease activity towards branched DNA substrates, introducing single-strand cuts in duplex DNA close to junctions with ss-DNA (Potential). Has a preference for replication forks over 5' flap structures or Holliday junctions and shows much lower activity toward 3' flap structures. Required for proper crossover distribution through inhibition of crossover formation at the central region of chromosomes. In Caenorhabditis briggsae, this protein is Structure-specific endonuclease subunit SLX1 homolog.